Here is a 343-residue protein sequence, read N- to C-terminus: Methionine import ATP-binding protein MetN 1 (343 aa).

The region spanning Ile2–Ile241 is the ABC transporter domain. Residue Gly38–Ser45 coordinates ATP.

It belongs to the ABC transporter superfamily. Methionine importer (TC 3.A.1.24) family. The complex is composed of two ATP-binding proteins (MetN), two transmembrane proteins (MetI) and a solute-binding protein (MetQ).

The protein resides in the cell inner membrane. The enzyme catalyses L-methionine(out) + ATP + H2O = L-methionine(in) + ADP + phosphate + H(+). It carries out the reaction D-methionine(out) + ATP + H2O = D-methionine(in) + ADP + phosphate + H(+). Part of the ABC transporter complex MetNIQ involved in methionine import. Responsible for energy coupling to the transport system. The polypeptide is Methionine import ATP-binding protein MetN 1 (Salmonella typhi).